A 463-amino-acid polypeptide reads, in one-letter code: L-seryl-tRNA(Sec) selenium transferase (463 aa).

Lys295 is subject to N6-(pyridoxal phosphate)lysine.

It belongs to the SelA family. Homodecamer; pentamer of dimers. Binds only one seryl-tRNA(Sec) per dimer. The cofactor is pyridoxal 5'-phosphate.

The protein resides in the cytoplasm. It catalyses the reaction L-seryl-tRNA(Sec) + selenophosphate + H(+) = L-selenocysteinyl-tRNA(Sec) + phosphate. It functions in the pathway aminoacyl-tRNA biosynthesis; selenocysteinyl-tRNA(Sec) biosynthesis; selenocysteinyl-tRNA(Sec) from L-seryl-tRNA(Sec) (bacterial route): step 1/1. Functionally, converts seryl-tRNA(Sec) to selenocysteinyl-tRNA(Sec) required for selenoprotein biosynthesis. The sequence is that of L-seryl-tRNA(Sec) selenium transferase from Shigella flexneri serotype 5b (strain 8401).